A 231-amino-acid polypeptide reads, in one-letter code: Large ribosomal subunit protein uL1 (231 aa).

Belongs to the universal ribosomal protein uL1 family. As to quaternary structure, part of the 50S ribosomal subunit.

Its function is as follows. Binds directly to 23S rRNA. The L1 stalk is quite mobile in the ribosome, and is involved in E site tRNA release. Protein L1 is also a translational repressor protein, it controls the translation of the L11 operon by binding to its mRNA. In Pseudomonas aeruginosa (strain LESB58), this protein is Large ribosomal subunit protein uL1.